The primary structure comprises 140 residues: Nucleoside diphosphate kinase (140 aa).

ATP contacts are provided by lysine 11, phenylalanine 59, arginine 87, threonine 93, arginine 104, and asparagine 114. The active-site Pros-phosphohistidine intermediate is the histidine 117.

Belongs to the NDK family. As to quaternary structure, homotetramer. It depends on Mg(2+) as a cofactor.

It localises to the cytoplasm. It catalyses the reaction a 2'-deoxyribonucleoside 5'-diphosphate + ATP = a 2'-deoxyribonucleoside 5'-triphosphate + ADP. The catalysed reaction is a ribonucleoside 5'-diphosphate + ATP = a ribonucleoside 5'-triphosphate + ADP. Major role in the synthesis of nucleoside triphosphates other than ATP. The ATP gamma phosphate is transferred to the NDP beta phosphate via a ping-pong mechanism, using a phosphorylated active-site intermediate. In Rhodopseudomonas palustris (strain HaA2), this protein is Nucleoside diphosphate kinase.